Reading from the N-terminus, the 359-residue chain is Peptide chain release factor 1 (359 aa).

Position 236 is an N5-methylglutamine (Gln-236). The interval Lys-286–Ser-305 is disordered.

It belongs to the prokaryotic/mitochondrial release factor family. Methylated by PrmC. Methylation increases the termination efficiency of RF1.

It localises to the cytoplasm. In terms of biological role, peptide chain release factor 1 directs the termination of translation in response to the peptide chain termination codons UAG and UAA. The chain is Peptide chain release factor 1 from Wolbachia pipientis wMel.